Here is a 217-residue protein sequence, read N- to C-terminus: Ras-related protein RIC2 (217 aa).

Residues 21–28 (GDSGVGKS), 69–73 (DTAGQ), and 127–130 (NKSD) contribute to the GTP site. S-geranylgeranyl cysteine attachment occurs at residues Cys214 and Cys215.

Belongs to the small GTPase superfamily. Rab family.

Its subcellular location is the cell membrane. Its function is as follows. Possesses GTPase activity. This chain is Ras-related protein RIC2 (RIC2), found in Oryza sativa subsp. japonica (Rice).